The sequence spans 589 residues: C-type lectin domain family 4 member F (589 aa).

Over 1–39 (MDGEAVRFCTDNQCVSLHPQEVDSVAMAPAAPKIPRLVQ) the chain is Cytoplasmic. Residues 40-60 (ATPAFMAVTLVFSLVTLFVVV) traverse the membrane as a helical; Signal-anchor for type II membrane protein segment. Residues 61–589 (QQQTRPVPKP…TPPCPWILSN (529 aa)) lie on the Extracellular side of the membrane. Residues N79, N113, N207, N230, N244, N312, N385, and N399 are each glycosylated (N-linked (GlcNAc...) asparagine). Residues 476–589 (NGGSLYYFSS…TPPCPWILSN (114 aa)) enclose the C-type lectin domain.

It localises to the membrane. Functionally, receptor with an affinity for galactose and fucose. Could be involved in endocytosis. The chain is C-type lectin domain family 4 member F (CLEC4F) from Homo sapiens (Human).